The sequence spans 185 residues: Monothiol glutaredoxin-S4, mitochondrial (185 aa).

A mitochondrion-targeting transit peptide spans 1-36; it reads MARLMSSALIRGLVRSSCSPTVAAVAQPTIHQFRNY. The tract at residues 37–74 is disordered; it reads SSGLGGDSTATGDSSSTRVAADPDTHQDFQPTTKSSNM. Residues 43–53 are compositionally biased toward low complexity; sequence DSTATGDSSST. The span at 64–74 shows a compositional bias: polar residues; that stretch reads DFQPTTKSSNM. In terms of domain architecture, Glutaredoxin spans 77–179; that stretch reads DDIVSQDIKE…DVLGDIAQKR (103 aa). Residue Lys94 coordinates glutathione. A [2Fe-2S] cluster-binding site is contributed by Cys102. Glutathione-binding positions include Lys131, Phe143, and 156-157; that span reads SD.

It belongs to the glutaredoxin family. CGFS subfamily.

The protein localises to the mitochondrion. Its function is as follows. May only reduce GSH-thiol disulfides, but not protein disulfides. The sequence is that of Monothiol glutaredoxin-S4, mitochondrial (GRXS4) from Oryza sativa subsp. japonica (Rice).